Reading from the N-terminus, the 105-residue chain is Large ribosomal subunit protein eL36 (105 aa).

A disordered region spans residues 86 to 105; it reads QAGKKKRDDIANINRKASAK.

This sequence belongs to the eukaryotic ribosomal protein eL36 family.

The chain is Large ribosomal subunit protein eL36 (rpl36) from Dictyostelium discoideum (Social amoeba).